We begin with the raw amino-acid sequence, 449 residues long: UDP-N-acetylglucosamine 1-carboxyvinyltransferase (449 aa).

Position 51-52 (51-52) interacts with phosphoenolpyruvate; sequence KN. Arg121 contributes to the UDP-N-acetyl-alpha-D-glucosamine binding site. The Proton donor role is filled by Cys145. At Cys145 the chain carries 2-(S-cysteinyl)pyruvic acid O-phosphothioketal. Residues 150–154, Asp333, and Ile355 each bind UDP-N-acetyl-alpha-D-glucosamine; that span reads RPVDQ.

Belongs to the EPSP synthase family. MurA subfamily.

The protein localises to the cytoplasm. It carries out the reaction phosphoenolpyruvate + UDP-N-acetyl-alpha-D-glucosamine = UDP-N-acetyl-3-O-(1-carboxyvinyl)-alpha-D-glucosamine + phosphate. The protein operates within cell wall biogenesis; peptidoglycan biosynthesis. In terms of biological role, cell wall formation. Adds enolpyruvyl to UDP-N-acetylglucosamine. This chain is UDP-N-acetylglucosamine 1-carboxyvinyltransferase, found in Burkholderia lata (strain ATCC 17760 / DSM 23089 / LMG 22485 / NCIMB 9086 / R18194 / 383).